We begin with the raw amino-acid sequence, 154 residues long: uncharacterized protein (154 aa).

Residues 1-42 constitute a mitochondrion transit peptide; sequence MLRVIWKHSSRVTRSIELSNISTTNHTRSLRRLSWISPRRFY.

It localises to the mitochondrion. This is an uncharacterized protein from Saccharomyces cerevisiae (strain ATCC 204508 / S288c) (Baker's yeast).